A 430-amino-acid chain; its full sequence is Adenylosuccinate synthetase (430 aa).

Residues 13-19 (GDEGKGK) and 41-43 (GHT) each bind GTP. The Proton acceptor role is filled by aspartate 14. 2 residues coordinate Mg(2+): aspartate 14 and glycine 41. IMP-binding positions include 14–17 (DEGK), 39–42 (NAGH), threonine 130, arginine 144, glutamine 225, threonine 240, and arginine 304. The Proton donor role is filled by histidine 42. 300 to 306 (STTGRAR) contacts substrate. GTP-binding positions include arginine 306, 332 to 334 (KLD), and 414 to 416 (STG).

Belongs to the adenylosuccinate synthetase family. In terms of assembly, homodimer. It depends on Mg(2+) as a cofactor.

Its subcellular location is the cytoplasm. The catalysed reaction is IMP + L-aspartate + GTP = N(6)-(1,2-dicarboxyethyl)-AMP + GDP + phosphate + 2 H(+). The protein operates within purine metabolism; AMP biosynthesis via de novo pathway; AMP from IMP: step 1/2. In terms of biological role, plays an important role in the de novo pathway of purine nucleotide biosynthesis. Catalyzes the first committed step in the biosynthesis of AMP from IMP. The protein is Adenylosuccinate synthetase of Alcanivorax borkumensis (strain ATCC 700651 / DSM 11573 / NCIMB 13689 / SK2).